We begin with the raw amino-acid sequence, 231 residues long: 7-cyano-7-deazaguanine synthase (231 aa).

8 to 18 (FSGGQDSTTCL) is a binding site for ATP. 4 residues coordinate Zn(2+): Cys-188, Cys-197, Cys-200, and Cys-203.

It belongs to the QueC family. Zn(2+) is required as a cofactor.

The enzyme catalyses 7-carboxy-7-deazaguanine + NH4(+) + ATP = 7-cyano-7-deazaguanine + ADP + phosphate + H2O + H(+). The protein operates within purine metabolism; 7-cyano-7-deazaguanine biosynthesis. Functionally, catalyzes the ATP-dependent conversion of 7-carboxy-7-deazaguanine (CDG) to 7-cyano-7-deazaguanine (preQ(0)). The protein is 7-cyano-7-deazaguanine synthase of Shigella dysenteriae serotype 1 (strain Sd197).